Here is a 363-residue protein sequence, read N- to C-terminus: S-adenosylmethionine decarboxylase proenzyme (363 aa).

Active-site residues include E9 and E12. S69 serves as the catalytic Schiff-base intermediate with substrate; via pyruvic acid. S69 is subject to Pyruvic acid (Ser); by autocatalysis. C83 acts as the Proton donor; for catalytic activity in catalysis. Active-site proton acceptor; for processing activity residues include S232 and H245.

It belongs to the eukaryotic AdoMetDC family. Pyruvate is required as a cofactor. Post-translationally, is synthesized initially as an inactive proenzyme. Formation of the active enzyme involves a self-maturation process in which the active site pyruvoyl group is generated from an internal serine residue via an autocatalytic post-translational modification. Two non-identical subunits are generated from the proenzyme in this reaction, and the pyruvate is formed at the N-terminus of the alpha chain, which is derived from the carboxyl end of the proenzyme. The post-translation cleavage follows an unusual pathway, termed non-hydrolytic serinolysis, in which the side chain hydroxyl group of the serine supplies its oxygen atom to form the C-terminus of the beta chain, while the remainder of the serine residue undergoes an oxidative deamination to produce ammonia and the pyruvoyl group blocking the N-terminus of the alpha chain.

The catalysed reaction is S-adenosyl-L-methionine + H(+) = S-adenosyl 3-(methylsulfanyl)propylamine + CO2. Its pathway is amine and polyamine biosynthesis; S-adenosylmethioninamine biosynthesis; S-adenosylmethioninamine from S-adenosyl-L-methionine: step 1/1. This Spinacia oleracea (Spinach) protein is S-adenosylmethionine decarboxylase proenzyme (SAMDC).